A 265-amino-acid polypeptide reads, in one-letter code: MAPERWDDEEDSVSPPPVAPRRRFDDEEEDEVLDSWDAAEDSEVEREKAAKAAEAKAKADAEAAAKKKSKSQRIQEHKEERKKKAEEEDSDSEEEDDADKRARLRRAQKDADLKHAEDLFGDIDLNRNRGAPKAIVISDSADPTQAVDLSAMPLFKPTTKEQFARLTSTLIPLLTPHSKKPHYSLWAQEFAKQLVKELNSADVKKIASAMTTMSNEKMREERAADKGSKKSKAAKTKVSLVTSRDNKLDADYDNGDDGLGDDDFM.

Composition is skewed to acidic residues over residues 1–12 and 26–44; these read MAPERWDDEEDS and DEEEDEVLDSWDAAEDSEV. Disordered regions lie at residues 1–113 and 212–265; these read MAPE…DADL and TMSN…DDFM. Basic and acidic residues-rich tracts occupy residues 45–65 and 73–86; these read EREKAAKAAEAKAKADAEAAA and RIQEHKEERKKKAE. Residues 61 to 95 are a coiled coil; it reads AEAAAKKKSKSQRIQEHKEERKKKAEEEDSDSEEE. The span at 87–97 shows a compositional bias: acidic residues; that stretch reads EEDSDSEEEDD. Residues 216–228 show a composition bias toward basic and acidic residues; that stretch reads EKMREERAADKGS. Residues 251–265 are compositionally biased toward acidic residues; the sequence is DYDNGDDGLGDDDFM.

Belongs to the eIF-3 subunit J family. Component of the eukaryotic translation initiation factor 3 (eIF-3) complex.

It is found in the cytoplasm. Component of the eukaryotic translation initiation factor 3 (eIF-3) complex, which is involved in protein synthesis of a specialized repertoire of mRNAs and, together with other initiation factors, stimulates binding of mRNA and methionyl-tRNAi to the 40S ribosome. The eIF-3 complex specifically targets and initiates translation of a subset of mRNAs involved in cell proliferation. This is Eukaryotic translation initiation factor 3 subunit J (hcr1) from Aspergillus oryzae (strain ATCC 42149 / RIB 40) (Yellow koji mold).